The sequence spans 180 residues: UPF0340 protein YwlG (180 aa).

The protein belongs to the UPF0340 family.

The polypeptide is UPF0340 protein YwlG (ywlG) (Bacillus subtilis (strain 168)).